The primary structure comprises 468 residues: A-type ATP synthase subunit B (468 aa).

It belongs to the ATPase alpha/beta chains family. As to quaternary structure, has multiple subunits with at least A(3), B(3), C, D, E, F, H, I and proteolipid K(x).

It is found in the cell membrane. Functionally, component of the A-type ATP synthase that produces ATP from ADP in the presence of a proton gradient across the membrane. The B chain is a regulatory subunit. In Haloferax volcanii (strain ATCC 29605 / DSM 3757 / JCM 8879 / NBRC 14742 / NCIMB 2012 / VKM B-1768 / DS2) (Halobacterium volcanii), this protein is A-type ATP synthase subunit B.